A 136-amino-acid chain; its full sequence is Small ribosomal subunit protein uS11c (136 aa).

This sequence belongs to the universal ribosomal protein uS11 family. As to quaternary structure, part of the 30S ribosomal subunit.

The protein resides in the plastid. This chain is Small ribosomal subunit protein uS11c, found in Epifagus virginiana (Beechdrops).